The following is a 346-amino-acid chain: MAKRKLTQNQTRRIQSNNAKTLHRHKKKDIEWSDEMLGESQEGVVVTRYSIHADVENEQGEIYRCNLRRTLSSLVVGDKVVWRKGNEQLQGVSGVIEAIHPRENEISRPDYYDGLKPIAANIDRIIIVSAVLPTLSLNIIDRYLVVCEIAGITPLIVLNKVDLLAQEQRQEIEDQLKIYQDIGYEILMISAKSGENMEKLTALLAQGTAIFVGQSGVGKSSLINHILPSVNAQVGDVSETSGLGQHTTTSSRLYHLPQGGNLIDSPGIREFGLWHLDAEQITKGYREFQYVLGTCKFRDCKHLSDPGCALREAVEQGKISPVRYDSYHRLIESLSETKSQRHFSLV.

The tract at residues 1–26 is disordered; the sequence is MAKRKLTQNQTRRIQSNNAKTLHRHK. A compositionally biased stretch (polar residues) spans 7-20; sequence TQNQTRRIQSNNAK. The region spanning 103 to 271 is the CP-type G domain; the sequence is ENEISRPDYY…LIDSPGIREF (169 aa). Residues 159 to 162 and 213 to 221 contribute to the GTP site; these read NKVD and GQSGVGKSS. Zn(2+)-binding residues include C295, C300, H302, and C308.

The protein belongs to the TRAFAC class YlqF/YawG GTPase family. RsgA subfamily. In terms of assembly, monomer. Associates with 30S ribosomal subunit, binds 16S rRNA. It depends on Zn(2+) as a cofactor.

The protein resides in the cytoplasm. In terms of biological role, one of several proteins that assist in the late maturation steps of the functional core of the 30S ribosomal subunit. Helps release RbfA from mature subunits. May play a role in the assembly of ribosomal proteins into the subunit. Circularly permuted GTPase that catalyzes slow GTP hydrolysis, GTPase activity is stimulated by the 30S ribosomal subunit. This Haemophilus influenzae (strain 86-028NP) protein is Small ribosomal subunit biogenesis GTPase RsgA.